A 114-amino-acid chain; its full sequence is Fructose-bisphosphate aldolase 2 (114 aa).

35 to 38 (NIDT) serves as a coordination point for dihydroxyacetone phosphate.

This sequence belongs to the class II fructose-bisphosphate aldolase family. In terms of assembly, homodimer. Requires Zn(2+) as cofactor.

The catalysed reaction is beta-D-fructose 1,6-bisphosphate = D-glyceraldehyde 3-phosphate + dihydroxyacetone phosphate. It functions in the pathway carbohydrate biosynthesis; Calvin cycle. It participates in carbohydrate degradation; glycolysis; D-glyceraldehyde 3-phosphate and glycerone phosphate from D-glucose: step 4/4. Catalyzes the aldol condensation of dihydroxyacetone phosphate (DHAP or glycerone-phosphate) with glyceraldehyde 3-phosphate (G3P) to form fructose 1,6-bisphosphate (FBP) in gluconeogenesis and the reverse reaction in glycolysis. The protein is Fructose-bisphosphate aldolase 2 (cbbA) of Rhodobacter capsulatus (Rhodopseudomonas capsulata).